A 242-amino-acid polypeptide reads, in one-letter code: ATP synthase subunit 4, mitochondrial (242 aa).

Residues 1–35 constitute a mitochondrion transit peptide; that stretch reads MSFRALTMRSAVARTALNNTIRSARVATPYLGIRH.

The protein belongs to the eukaryotic ATPase B chain family. As to quaternary structure, F-type ATPases have 2 components, CF(1) - the catalytic core - and CF(0) - the membrane proton channel. In yeast, the dimeric form of ATP synthase consists of 17 polypeptides: alpha, beta, gamma, delta, epsilon, 4 (B), 5 (OSCP), 6 (A), 8, 9 (C), d, E (Tim11), f, g, h, i/j and k.

The protein localises to the mitochondrion. It is found in the mitochondrion inner membrane. In terms of biological role, mitochondrial membrane ATP synthase (F(1)F(0) ATP synthase or Complex V) produces ATP from ADP in the presence of a proton gradient across the membrane which is generated by electron transport complexes of the respiratory chain. F-type ATPases consist of two structural domains, F(1) - containing the extramembraneous catalytic core, and F(0) - containing the membrane proton channel, linked together by a central stalk and a peripheral stalk. During catalysis, ATP synthesis in the catalytic domain of F(1) is coupled via a rotary mechanism of the central stalk subunits to proton translocation. Part of the complex F(0) domain and the peripheric stalk, which acts as a stator to hold the catalytic alpha(3)beta(3) subcomplex and subunit a/ATP6 static relative to the rotary elements. This is ATP synthase subunit 4, mitochondrial (ATP4) from Candida glabrata (strain ATCC 2001 / BCRC 20586 / JCM 3761 / NBRC 0622 / NRRL Y-65 / CBS 138) (Yeast).